The following is a 59-amino-acid chain: Early growth response protein 1 (59 aa).

C2H2-type zinc fingers lie at residues 1-18 (CDRR…IRIH), 24-46 (FQCR…IRTH), and 52-59 (FACDICGR).

This sequence belongs to the EGR C2H2-type zinc-finger protein family.

The protein localises to the nucleus. Its subcellular location is the cytoplasm. In terms of biological role, transcriptional regulator. Recognizes and binds to the DNA sequence 5'-GCG(T/G)GGGCG-3'(EGR-site) in the promoter region of target genes. Binds double-stranded target DNA, irrespective of the cytosine methylation status. Regulates the transcription of numerous target genes, and thereby plays an important role in regulating the response to growth factors, DNA damage, and ischemia. Plays a role in the regulation of cell survival, proliferation and cell death. Mediates responses to ischemia and hypoxia; regulates the expression of proteins that are involved in inflammatory processes. Plays a role in regulating the expression of circadian clock genes. The polypeptide is Early growth response protein 1 (EGR1) (Serinus canaria (Island canary)).